The sequence spans 155 residues: Putative pre-16S rRNA nuclease (155 aa).

Belongs to the YqgF nuclease family.

The protein localises to the cytoplasm. Its function is as follows. Could be a nuclease involved in processing of the 5'-end of pre-16S rRNA. This Wolbachia sp. subsp. Drosophila simulans (strain wRi) protein is Putative pre-16S rRNA nuclease.